An 87-amino-acid chain; its full sequence is Phosphoribosyl-ATP pyrophosphatase (87 aa).

It belongs to the PRA-PH family.

It localises to the cytoplasm. It catalyses the reaction 1-(5-phospho-beta-D-ribosyl)-ATP + H2O = 1-(5-phospho-beta-D-ribosyl)-5'-AMP + diphosphate + H(+). The protein operates within amino-acid biosynthesis; L-histidine biosynthesis; L-histidine from 5-phospho-alpha-D-ribose 1-diphosphate: step 2/9. This chain is Phosphoribosyl-ATP pyrophosphatase, found in Thermobifida fusca (strain YX).